We begin with the raw amino-acid sequence, 630 residues long: Chaperone protein HtpG (630 aa).

The segment at 1-339 (MKGQETRGFQ…SNDLPLNVSR (339 aa)) is a; substrate-binding. A b region spans residues 340 to 555 (EILQDNSITR…VDEMSTQMAK (216 aa)). The segment at 556-630 (LFAAAGQQVP…MNQLLLSEKA (75 aa)) is c.

The protein belongs to the heat shock protein 90 family. As to quaternary structure, homodimer.

The protein resides in the cytoplasm. In terms of biological role, molecular chaperone. Has ATPase activity. This is Chaperone protein HtpG from Photorhabdus laumondii subsp. laumondii (strain DSM 15139 / CIP 105565 / TT01) (Photorhabdus luminescens subsp. laumondii).